A 185-amino-acid polypeptide reads, in one-letter code: Small ribosomal subunit protein uS4c (185 aa).

The 63-residue stretch at 72 to 134 (MRLDNVIFRL…PTSCNALKGE (63 aa)) folds into the S4 RNA-binding domain. The tract at residues 132 to 154 (KGESPGGGETPDHLTASLSEGSR) is disordered.

It belongs to the universal ribosomal protein uS4 family. As to quaternary structure, part of the 30S ribosomal subunit. Contacts protein S5. The interaction surface between S4 and S5 is involved in control of translational fidelity.

The protein localises to the plastid. Its subcellular location is the chloroplast. Functionally, one of the primary rRNA binding proteins, it binds directly to 16S rRNA where it nucleates assembly of the body of the 30S subunit. In terms of biological role, with S5 and S12 plays an important role in translational accuracy. This is Small ribosomal subunit protein uS4c (rps4) from Woodwardia unigemmata (Chainfern).